Consider the following 181-residue polypeptide: SecB-like chaperone MT2006 (181 aa).

This sequence belongs to the SecB-like family. In terms of assembly, homotetramer, interacts with antitoxin HigA1.

Chaperone component of an atypical, type II toxin-antitoxin chaperone (TAC) module, probably required for antitoxin HigA1 to neutralize its cognate toxin HigB1. The chain is SecB-like chaperone MT2006 (secBL) from Mycobacterium tuberculosis (strain CDC 1551 / Oshkosh).